The sequence spans 491 residues: Serine/threonine-protein kinase 33 (491 aa).

Residues 51 to 89 (FASQERKKERNTSRESSLKDLSIRTSNVERKPQAQWSRS) form a disordered region. Basic and acidic residues predominate over residues 54–82 (QERKKERNTSRESSLKDLSIRTSNVERKP). In terms of domain architecture, Protein kinase spans 111–377 (YTFGRILGQG…AKELLDNQWL (267 aa)). ATP contacts are provided by residues 117–125 (LGQGSFGMV) and lysine 140. The active-site Proton acceptor is the aspartate 233. Residues 398–491 (KNNPESDEET…TTLFRGKKRL (94 aa)) form a disordered region. Positions 402 to 414 (ESDEETNTDEETE) are enriched in acidic residues. The residue at position 403 (serine 403) is a Phosphoserine. Over residues 415-431 (QSAVYSPSANTAKQPTN) the composition is skewed to polar residues. Low complexity predominate over residues 445–457 (SSNSSSSKLLSAE). Residues 475-484 (AKTTLKSTTL) are compositionally biased toward polar residues.

The protein belongs to the protein kinase superfamily. CAMK Ser/Thr protein kinase family. CaMK subfamily. Homodimer. Autophosphorylated. Highly expressed in testis, particularly in cells from the spermatogenic epithelia. Present in meiotic and post meiotic sperm cells. Significant expression is detected in lung epithelia, alveolar macrophages, horizontal cells in the retina and in embryonic organs such as heart, brain and spinal cord. Also expressed in pituitary gland, kidney, pancreas, trachea and thyroid gland.

The protein resides in the cytoplasm. Its subcellular location is the cytoskeleton. The protein localises to the perinuclear region. It catalyses the reaction L-seryl-[protein] + ATP = O-phospho-L-seryl-[protein] + ADP + H(+). It carries out the reaction L-threonyl-[protein] + ATP = O-phospho-L-threonyl-[protein] + ADP + H(+). With respect to regulation, specifically inhibited by CDD-2807 ((3-([1,1'-Biphenyl]-2-ylethynyl)-1H-indazol-5-yl)(2,6-diazaspiro[3.5]nonan-2-yl)methanone). CDD-2807 is a potential male contraceptive drug: it is not toxic, efficiently crosses the blood-testis barrier and induces a reversible contraceptive effect in male mice. Its function is as follows. Serine/threonine protein kinase required for spermatid differentiation and male fertility. Promotes sperm flagella assembly during spermatogenesis by mediating phosphorylation of fibrous sheath proteins AKAP3 and AKAP4. Also phosphorylates vimentin/VIM, thereby regulating the dynamic behavior of the intermediate filament cytoskeleton. The chain is Serine/threonine-protein kinase 33 from Mus musculus (Mouse).